The sequence spans 166 residues: Putative 4-hydroxy-4-methyl-2-oxoglutarate aldolase (166 aa).

Residues 74–77 (GDQI) and R96 each bind substrate. D97 provides a ligand contact to a divalent metal cation.

The protein belongs to the class II aldolase/RraA-like family. In terms of assembly, homotrimer. A divalent metal cation serves as cofactor.

It catalyses the reaction 4-hydroxy-4-methyl-2-oxoglutarate = 2 pyruvate. The catalysed reaction is oxaloacetate + H(+) = pyruvate + CO2. Functionally, catalyzes the aldol cleavage of 4-hydroxy-4-methyl-2-oxoglutarate (HMG) into 2 molecules of pyruvate. Also contains a secondary oxaloacetate (OAA) decarboxylase activity due to the common pyruvate enolate transition state formed following C-C bond cleavage in the retro-aldol and decarboxylation reactions. The chain is Putative 4-hydroxy-4-methyl-2-oxoglutarate aldolase from Xanthomonas oryzae pv. oryzae (strain MAFF 311018).